The following is a 302-amino-acid chain: Spermidine synthase (302 aa).

N-acetylmethionine is present on methionine 1. Positions 18-253 (EGWFRETCSL…GQIGFMLCSK (236 aa)) constitute a PABS domain. Glutamine 49 lines the S-adenosyl 3-(methylsulfanyl)propylamine pocket. Tyrosine 79 is a putrescine binding site. Residues glutamine 80, aspartate 104, glutamate 124, 155 to 156 (DG), and aspartate 173 contribute to the S-adenosyl 3-(methylsulfanyl)propylamine site. Residue aspartate 173 is the Proton acceptor of the active site. Putrescine-binding positions include 173–176 (DSSD) and tyrosine 241.

This sequence belongs to the spermidine/spermine synthase family. Homodimer or homotetramer.

The enzyme catalyses S-adenosyl 3-(methylsulfanyl)propylamine + putrescine = S-methyl-5'-thioadenosine + spermidine + H(+). The protein operates within amine and polyamine biosynthesis; spermidine biosynthesis; spermidine from putrescine: step 1/1. Its activity is regulated as follows. The activity is thought to be regulated mainly by the availability of decarboxylated S-adenosylmethionine. In terms of biological role, catalyzes the production of spermidine from putrescine and decarboxylated S-adenosylmethionine (dcSAM). Has a strong preference for putrescine as substrate, and has very low activity towards 1,3-diaminopropane. Has extremely low activity towards spermidine. The sequence is that of Spermidine synthase (SRM) from Homo sapiens (Human).